The following is a 454-amino-acid chain: tRNA modification GTPase MnmE (454 aa).

The (6S)-5-formyl-5,6,7,8-tetrahydrofolate site is built by Arg23, Glu80, and Lys120. In terms of domain architecture, TrmE-type G spans 216–377 (GMKVVIAGRP…LRNHLKQSMG (162 aa)). K(+) is bound at residue Asn226. Residues 226 to 231 (NAGKSS), 245 to 251 (TDIAGTT), 270 to 273 (DTAG), 335 to 338 (NKAD), and 358 to 360 (SAR) contribute to the GTP site. Residue Ser230 coordinates Mg(2+). K(+) contacts are provided by Thr245, Ile247, and Thr250. Thr251 is a binding site for Mg(2+). Residue Lys454 participates in (6S)-5-formyl-5,6,7,8-tetrahydrofolate binding.

This sequence belongs to the TRAFAC class TrmE-Era-EngA-EngB-Septin-like GTPase superfamily. TrmE GTPase family. In terms of assembly, homodimer. Heterotetramer of two MnmE and two MnmG subunits. Requires K(+) as cofactor.

It localises to the cytoplasm. Functionally, exhibits a very high intrinsic GTPase hydrolysis rate. Involved in the addition of a carboxymethylaminomethyl (cmnm) group at the wobble position (U34) of certain tRNAs, forming tRNA-cmnm(5)s(2)U34. The polypeptide is tRNA modification GTPase MnmE (Citrobacter koseri (strain ATCC BAA-895 / CDC 4225-83 / SGSC4696)).